We begin with the raw amino-acid sequence, 229 residues long: Platelet-activating factor acetylhydrolase IB subunit alpha2 (229 aa).

N-acetylserine is present on serine 2. Phosphoserine is present on serine 2. Serine 48 is an active-site residue. Serine 64 carries the phosphoserine modification. Active-site residues include aspartate 193 and histidine 196. Phosphothreonine is present on threonine 220.

This sequence belongs to the 'GDSL' lipolytic enzyme family. Platelet-activating factor acetylhydrolase IB beta/gamma subunits subfamily. In terms of assembly, forms a catalytic dimer which is either homodimer (alpha2/alpha2 homodimer) or heterodimer with PAFAH1B3 (alpha2/alpha1 heterodimer). Component of the cytosolic (PAF-AH (I)) heterotetrameric enzyme, which is composed of PAFAH1B1 (beta), PAFAH1B2 (alpha2) and PAFAH1B3 (alpha1) subunits. The catalytic activity of the enzyme resides in the alpha1 (PAFAH1B3) and alpha2 (PAFAH1B2) subunits, whereas the beta subunit (PAFAH1B1) has regulatory activity. Trimer formation is not essential for the catalytic activity. Interacts (homodimer form) with PAFAH1B1 (homodimer form); PAFAH1B2 competes with NDEL1 for PAFAH1B1 binding. Interacts with VLDLR; this interaction may modulate the Reelin pathway.

It localises to the cytoplasm. The catalysed reaction is a 1-O-alkyl-2-acetyl-sn-glycero-3-phosphocholine + H2O = a 1-O-alkyl-sn-glycero-3-phosphocholine + acetate + H(+). It carries out the reaction 1-O-hexadecyl-2-acetyl-sn-glycero-3-phosphocholine + H2O = 1-O-hexadecyl-sn-glycero-3-phosphocholine + acetate + H(+). The enzyme catalyses 1-O-hexadecyl-2-acetyl-sn-glycero-3-phosphate + H2O = 1-O-hexadecyl-sn-glycero-3-phosphate + acetate + H(+). It catalyses the reaction 1-O-hexadecyl-2-acetyl-sn-glycero-3-phosphoethanolamine + H2O = 1-O-hexadecyl-sn-glycero-3-phosphoethanolamine + acetate + H(+). With respect to regulation, beta subunit (PAFAH1B1) stimulates the acetylhydrolase activity of the alpha2/alpha2 catalytic homodimer. Its function is as follows. Alpha2 catalytic subunit of the cytosolic type I platelet-activating factor (PAF) acetylhydrolase (PAF-AH (I)) heterotetrameric enzyme that catalyzes the hydrolyze of the acetyl group at the sn-2 position of PAF and its analogs and modulates the action of PAF. The activity and substrate specificity of PAF-AH (I) are affected by its subunit composition. The alpha2/alpha2 homodimer (PAFAH1B2/PAFAH1B2 homodimer) hydrolyzes PAF and 1-O-alkyl-2-acetyl-sn-glycero-3-phosphorylethanolamine (AAGPE) more efficiently than 1-O-alkyl-2-acetyl-sn-glycero-3-phosphoric acid (AAGPA). In contrast, the alpha1/alpha2 heterodimer(PAFAH1B3/PAFAH1B3 heterodimer) hydrolyzes AAGPA more efficiently than PAF, but has little hydrolytic activity towards AAGPE. May play a role in male germ cell meiosis during the late pachytenestage and meiotic divisions as well as early spermiogenesis. The protein is Platelet-activating factor acetylhydrolase IB subunit alpha2 of Pongo abelii (Sumatran orangutan).